The chain runs to 355 residues: Holliday junction branch migration complex subunit RuvB (355 aa).

The interval 1-193 (MGRFSEDSAD…FGFTAHMDFY (193 aa)) is large ATPase domain (RuvB-L). ATP contacts are provided by residues Leu32, Arg33, Gly74, Lys77, Thr78, Ser79, 140–142 (EDF), Arg183, Tyr193, and Arg230. Thr78 lines the Mg(2+) pocket. A small ATPAse domain (RuvB-S) region spans residues 194–264 (EPSELERVLA…IAKYALEVYD (71 aa)). Residues 267 to 355 (ELGLDRLDRA…VGLGQTGLFD (89 aa)) form a head domain (RuvB-H) region. Arg322 and Arg327 together coordinate DNA.

The protein belongs to the RuvB family. As to quaternary structure, homohexamer. Forms an RuvA(8)-RuvB(12)-Holliday junction (HJ) complex. HJ DNA is sandwiched between 2 RuvA tetramers; dsDNA enters through RuvA and exits via RuvB. An RuvB hexamer assembles on each DNA strand where it exits the tetramer. Each RuvB hexamer is contacted by two RuvA subunits (via domain III) on 2 adjacent RuvB subunits; this complex drives branch migration. In the full resolvosome a probable DNA-RuvA(4)-RuvB(12)-RuvC(2) complex forms which resolves the HJ.

The protein localises to the cytoplasm. The catalysed reaction is ATP + H2O = ADP + phosphate + H(+). Its function is as follows. The RuvA-RuvB-RuvC complex processes Holliday junction (HJ) DNA during genetic recombination and DNA repair, while the RuvA-RuvB complex plays an important role in the rescue of blocked DNA replication forks via replication fork reversal (RFR). RuvA specifically binds to HJ cruciform DNA, conferring on it an open structure. The RuvB hexamer acts as an ATP-dependent pump, pulling dsDNA into and through the RuvAB complex. RuvB forms 2 homohexamers on either side of HJ DNA bound by 1 or 2 RuvA tetramers; 4 subunits per hexamer contact DNA at a time. Coordinated motions by a converter formed by DNA-disengaged RuvB subunits stimulates ATP hydrolysis and nucleotide exchange. Immobilization of the converter enables RuvB to convert the ATP-contained energy into a lever motion, pulling 2 nucleotides of DNA out of the RuvA tetramer per ATP hydrolyzed, thus driving DNA branch migration. The RuvB motors rotate together with the DNA substrate, which together with the progressing nucleotide cycle form the mechanistic basis for DNA recombination by continuous HJ branch migration. Branch migration allows RuvC to scan DNA until it finds its consensus sequence, where it cleaves and resolves cruciform DNA. This is Holliday junction branch migration complex subunit RuvB from Mycolicibacterium vanbaalenii (strain DSM 7251 / JCM 13017 / BCRC 16820 / KCTC 9966 / NRRL B-24157 / PYR-1) (Mycobacterium vanbaalenii).